The sequence spans 440 residues: Glucose-1-phosphate adenylyltransferase (440 aa).

Alpha-D-glucose 1-phosphate contacts are provided by residues Tyr125, Gly190, 205 to 206 (EK), and Ser223.

The protein belongs to the bacterial/plant glucose-1-phosphate adenylyltransferase family. In terms of assembly, homotetramer.

It catalyses the reaction alpha-D-glucose 1-phosphate + ATP + H(+) = ADP-alpha-D-glucose + diphosphate. The protein operates within glycan biosynthesis; glycogen biosynthesis. Functionally, involved in the biosynthesis of ADP-glucose, a building block required for the elongation reactions to produce glycogen. Catalyzes the reaction between ATP and alpha-D-glucose 1-phosphate (G1P) to produce pyrophosphate and ADP-Glc. The protein is Glucose-1-phosphate adenylyltransferase of Dechloromonas aromatica (strain RCB).